Consider the following 341-residue polypeptide: Biotin synthase (341 aa).

The 225-residue stretch at 40–264 folds into the Radical SAM core domain; sequence NSVKLNYLVN…VAPRSELRIA (225 aa). Residues Cys55, Cys59, and Cys62 each coordinate [4Fe-4S] cluster. [2Fe-2S] cluster-binding residues include Cys99, Cys132, Cys192, and Arg262. A disordered region spans residues 317-341; that stretch reads ASAPQGGVEPVLRKRGAGTELQPNA.

It belongs to the radical SAM superfamily. Biotin synthase family. In terms of assembly, homodimer. Requires [4Fe-4S] cluster as cofactor. [2Fe-2S] cluster is required as a cofactor.

It catalyses the reaction (4R,5S)-dethiobiotin + (sulfur carrier)-SH + 2 reduced [2Fe-2S]-[ferredoxin] + 2 S-adenosyl-L-methionine = (sulfur carrier)-H + biotin + 2 5'-deoxyadenosine + 2 L-methionine + 2 oxidized [2Fe-2S]-[ferredoxin]. It functions in the pathway cofactor biosynthesis; biotin biosynthesis; biotin from 7,8-diaminononanoate: step 2/2. Functionally, catalyzes the conversion of dethiobiotin (DTB) to biotin by the insertion of a sulfur atom into dethiobiotin via a radical-based mechanism. The protein is Biotin synthase of Renibacterium salmoninarum (strain ATCC 33209 / DSM 20767 / JCM 11484 / NBRC 15589 / NCIMB 2235).